The primary structure comprises 809 residues: Leucine--tRNA ligase (809 aa).

The 'HIGH' region motif lies at 40–50 (PYPSGRIHMGH). Residues 579–583 (KMSKS) carry the 'KMSKS' region motif. Residue Lys-582 participates in ATP binding.

It belongs to the class-I aminoacyl-tRNA synthetase family.

It is found in the cytoplasm. It carries out the reaction tRNA(Leu) + L-leucine + ATP = L-leucyl-tRNA(Leu) + AMP + diphosphate. The polypeptide is Leucine--tRNA ligase (Campylobacter lari (strain RM2100 / D67 / ATCC BAA-1060)).